Consider the following 96-residue polypeptide: Defensin-like protein 151 (96 aa).

Positions Met1 to Gly29 are cleaved as a signal peptide. Intrachain disulfides connect Cys35/Cys88, Cys48/Cys68, Cys53/Cys82, and Cys57/Cys84.

It belongs to the DEFL family.

It is found in the secreted. This Arabidopsis thaliana (Mouse-ear cress) protein is Defensin-like protein 151 (LCR17).